A 425-amino-acid polypeptide reads, in one-letter code: Succinyl-diaminopimelate desuccinylase (425 aa).

Histidine 96 is a binding site for Zn(2+). The active site involves aspartate 98. Aspartate 129 contacts Zn(2+). The Proton acceptor role is filled by glutamate 163. Zn(2+) contacts are provided by glutamate 164, glutamate 192, and histidine 378.

Belongs to the peptidase M20A family. DapE subfamily. Homodimer. Requires Zn(2+) as cofactor. Co(2+) is required as a cofactor.

The catalysed reaction is N-succinyl-(2S,6S)-2,6-diaminopimelate + H2O = (2S,6S)-2,6-diaminopimelate + succinate. The protein operates within amino-acid biosynthesis; L-lysine biosynthesis via DAP pathway; LL-2,6-diaminopimelate from (S)-tetrahydrodipicolinate (succinylase route): step 3/3. Functionally, catalyzes the hydrolysis of N-succinyl-L,L-diaminopimelic acid (SDAP), forming succinate and LL-2,6-diaminopimelate (DAP), an intermediate involved in the bacterial biosynthesis of lysine and meso-diaminopimelic acid, an essential component of bacterial cell walls. In Polaromonas sp. (strain JS666 / ATCC BAA-500), this protein is Succinyl-diaminopimelate desuccinylase.